The primary structure comprises 323 residues: MEGLEENGSVQVGELLPCKICGRTFFPVALKKHGPICQKTATKKRKTFDSSRQRAEGTDIPTVKPLKPRPEPPKKPSNWRRKHEEFIATIRAAKGLGQVLKEGGKLPPPPPPSYDPDYIQCPYCQRRFNENAADRHINFCKEQAARISNKGKFSTDTKGKSTSRTQYKPPALKKFNSPGTTSSGSSRLPQPSGTSKTVVGAPSGKVSSVSSSSGNKLQTLSPSHKGIPAPHVGTNIKPRNSTPPSLARNPASGVLTSKRKTYSDSYMARPDGDYISSFNGGNTKGIEGNSAGHLPKFCHECGTKYPVEWAKFCCECGVRRMVL.

Residues 14-43 (ELLPCKICGRTFFPVALKKHGPICQKTATK) form a C2HC/C3H-type 1 zinc finger. The Zn(2+) site is built by C18, C21, H33, and C37. The tract at residues 42–81 (TKKRKTFDSSRQRAEGTDIPTVKPLKPRPEPPKKPSNWRR) is disordered. Over residues 47-57 (TFDSSRQRAEG) the composition is skewed to basic and acidic residues. A C2HC/C3H-type 2 zinc finger spans residues 117-146 (DYIQCPYCQRRFNENAADRHINFCKEQAAR). Residues C121, C124, H136, and C140 each contribute to the Zn(2+) site. The disordered stretch occupies residues 149–258 (NKGKFSTDTK…NPASGVLTSK (110 aa)). The span at 177-197 (SPGTTSSGSSRLPQPSGTSKT) shows a compositional bias: polar residues. Low complexity predominate over residues 198–214 (VVGAPSGKVSSVSSSSG). The residue at position 221 (S221) is a Phosphoserine. T242 is subject to Phosphothreonine. S290 is subject to Phosphoserine.

This sequence belongs to the ZC2HC1 family. The cofactor is Zn(2+).

In Bos taurus (Bovine), this protein is Zinc finger C2HC domain-containing protein 1A (ZC2HC1A).